A 396-amino-acid polypeptide reads, in one-letter code: 2,3-diketo-5-methylthiopentyl-1-phosphate enolase (396 aa).

Catalysis depends on lysine 85, which acts as the Proton acceptor. Substrate-binding positions include lysine 134, 160–163, histidine 251, glycine 323, and 345–346; these read KDDE and GG. The Mg(2+) site is built by lysine 160, aspartate 162, and glutamate 163. Position 160 is an N6-carboxylysine (lysine 160).

This sequence belongs to the RuBisCO large chain family. Type IV subfamily. As to quaternary structure, homodimer. Mg(2+) serves as cofactor.

It catalyses the reaction 5-methylsulfanyl-2,3-dioxopentyl phosphate = 2-hydroxy-5-methylsulfanyl-3-oxopent-1-enyl phosphate. It participates in amino-acid biosynthesis; L-methionine biosynthesis via salvage pathway; L-methionine from S-methyl-5-thio-alpha-D-ribose 1-phosphate: step 3/6. Functionally, catalyzes the enolization of 2,3-diketo-5-methylthiopentyl-1-phosphate (DK-MTP-1-P) into 2-hydroxy-3-keto-5-methylthiopentenyl-1-phosphate (HK-MTPenyl-1-P). The chain is 2,3-diketo-5-methylthiopentyl-1-phosphate enolase from Exiguobacterium sibiricum (strain DSM 17290 / CCUG 55495 / CIP 109462 / JCM 13490 / 255-15).